An 843-amino-acid chain; its full sequence is Protein P (843 aa).

The tract at residues 1-177 (MPLSYPHFRK…FCGSPYSWEQ (177 aa)) is terminal protein domain (TP). The interval 178–346 (ELQHGSTSIN…YCLSHIINLL (169 aa)) is spacer. Disordered regions lie at residues 202-221 (SGIL…FQQS) and 285-310 (TNPS…VPPG). The interval 347 to 690 (EDWGPCYEHG…YMNLYPVARQ (344 aa)) is polymerase/reverse transcriptase domain (RT). Positions 357 to 600 (QHHIRTPRTP…YTLNFMGYVI (244 aa)) constitute a Reverse transcriptase domain. The Mg(2+) site is built by D429, D551, and D552.

Belongs to the hepadnaviridae P protein family.

The catalysed reaction is DNA(n) + a 2'-deoxyribonucleoside 5'-triphosphate = DNA(n+1) + diphosphate. It catalyses the reaction Endonucleolytic cleavage to 5'-phosphomonoester.. Its activity is regulated as follows. Activated by host HSP70 and HSP40 in vitro to be able to bind the epsilon loop of the pgRNA. Because deletion of the RNase H region renders the protein partly chaperone-independent, the chaperones may be needed indirectly to relieve occlusion of the RNA-binding site by this domain. Inhibited by several reverse-transcriptase inhibitors: Lamivudine, Adefovir and Entecavir. Its function is as follows. Multifunctional enzyme that converts the viral RNA genome into dsDNA in viral cytoplasmic capsids. This enzyme displays a DNA polymerase activity that can copy either DNA or RNA templates, and a ribonuclease H (RNase H) activity that cleaves the RNA strand of RNA-DNA heteroduplexes in a partially processive 3'- to 5'-endonucleasic mode. Neo-synthesized pregenomic RNA (pgRNA) are encapsidated together with the P protein, and reverse-transcribed inside the nucleocapsid. Initiation of reverse-transcription occurs first by binding the epsilon loop on the pgRNA genome, and is initiated by protein priming, thereby the 5'-end of (-)DNA is covalently linked to P protein. Partial (+)DNA is synthesized from the (-)DNA template and generates the relaxed circular DNA (RC-DNA) genome. After budding and infection, the RC-DNA migrates in the nucleus, and is converted into a plasmid-like covalently closed circular DNA (cccDNA). The activity of P protein does not seem to be necessary for cccDNA generation, and is presumably released from (+)DNA by host nuclear DNA repair machinery. This chain is Protein P, found in Hepatitis B virus genotype F1 (isolate Argentina/sa11/2000) (HBV-F).